The following is a 182-amino-acid chain: Dipetalodipin (182 aa).

The N-terminal stretch at 1 to 18 is a signal peptide; sequence MKTIIAAIFLGILMHAFA. 3 disulfide bridges follow: cysteine 21/cysteine 134, cysteine 55/cysteine 181, and cysteine 87/cysteine 103.

This sequence belongs to the calycin superfamily. Triabin family. Expressed in salivary glands.

The protein resides in the secreted. Inhibits platelet aggregation, vasoconstriction, and angiogenesis through binding to distinct eicosanoids involved in inflammation (acts as a scavenger), and has a role in inhibiting host innate immunity by impairing platelet-assisted formation of neutrophil extracellular traps (NETs). Inhibits platelet aggregation by collagen (IC(50)=30 nM), thromboxane A2 mimetic (TXA2 mimetic), or arachidonic acid (AA) without affecting aggregation induced by ADP, convulxin (GP6 agonist), PMA, and ristocetin (vWF-dependent platelet agglutinator). Binds with high affinity to TXA2, TXB2, prostaglandine H2 mimetic (PGH2 mimetic), PGD2, PGJ2, and PGF2alpha. Also interacts with 15(S)-hydroxyeicosatetraenoic acid (HETE), being the first calycin/lipocalin described to date to bind to a derivative of 15-lipoxygenase. Binding is not observed to other prostaglandins, leukotrienes, HETEs, lipids, and biogenic amines. It prevents contraction of rat uterus stimulated by PGF2alpha and induces relaxation of aorta previously contracted with TXA2 mimetic. In addition, it inhibits angiogenesis mediated by 15(S)-HETE and does not enhance inhibition of collagen-induced platelet aggregation by SQ29548 (TXA2 antagonist) and indomethacin. Also impairs platelet-assisted formation of neutrophil extracellular traps (NETs). NETs are web-like structures of DNA and proteins that play an important role in killing of pathogens. In addition, NETs are implicated in thrombus formation. In vivo, this protein exhibits antithrombotic activity in two distinct mice models that are highly dependent on platelets. It is noteworthy that it inhibits thrombosis without promoting excessive bleeding. The chain is Dipetalodipin from Dipetalogaster maximus (Blood-sucking bug).